A 125-amino-acid polypeptide reads, in one-letter code: L-fucose mutarotase (125 aa).

The active-site Proton donor is the His13.

It belongs to the RbsD / FucU family. FucU mutarotase subfamily.

The enzyme catalyses alpha-L-fucose = beta-L-fucose. Active toward L-galactopyranoside and D-arabinopyranoside but no D-fucopyranoside activity detected. In terms of biological role, plays a role in the catabolism of L-fucose. Involved in the anomeric conversion of L-fucose. This chain is L-fucose mutarotase, found in Xanthomonas campestris pv. campestris (strain ATCC 33913 / DSM 3586 / NCPPB 528 / LMG 568 / P 25).